A 220-amino-acid chain; its full sequence is Putative cobalt transport protein CbiM (220 aa).

Helical transmembrane passes span 6 to 26 (GFLP…VISY), 45 to 65 (IAVA…SVTG), 74 to 94 (GIAV…IVLL), 107 to 127 (TLGA…WVVF), 153 to 173 (LVTS…AGVV), and 188 to 208 (IPIG…IAMS).

This sequence belongs to the CbiM family. As to quaternary structure, forms an energy-coupling factor (ECF) transporter complex composed of an ATP-binding protein (A component, CbiO), a transmembrane protein (T component, CbiQ) and 2 possible substrate-capture proteins (S components, CbiM and CbiN) of unknown stoichimetry.

It is found in the cell membrane. The protein operates within cofactor biosynthesis; adenosylcobalamin biosynthesis. Its function is as follows. Part of the energy-coupling factor (ECF) transporter complex CbiMNOQ involved in cobalt import. This is Putative cobalt transport protein CbiM from Halobacterium salinarum (strain ATCC 29341 / DSM 671 / R1).